We begin with the raw amino-acid sequence, 292 residues long: 4-diphosphocytidyl-2-C-methyl-D-erythritol kinase (292 aa).

Residue Lys13 is part of the active site. ATP is bound at residue 97-107 (PVAAGLAGGSS). The active site involves Asp139.

It belongs to the GHMP kinase family. IspE subfamily.

It catalyses the reaction 4-CDP-2-C-methyl-D-erythritol + ATP = 4-CDP-2-C-methyl-D-erythritol 2-phosphate + ADP + H(+). It participates in isoprenoid biosynthesis; isopentenyl diphosphate biosynthesis via DXP pathway; isopentenyl diphosphate from 1-deoxy-D-xylulose 5-phosphate: step 3/6. In terms of biological role, catalyzes the phosphorylation of the position 2 hydroxy group of 4-diphosphocytidyl-2C-methyl-D-erythritol. This Bacillus thuringiensis (strain Al Hakam) protein is 4-diphosphocytidyl-2-C-methyl-D-erythritol kinase.